The sequence spans 209 residues: Phosphopantothenoylcysteine decarboxylase (209 aa).

Residues 28-30 (GSV) and 53-55 (TKS) contribute to the FMN site. Catalysis depends on histidine 90, which acts as the Proton donor. FMN contacts are provided by residues 106 to 109 (SANT) and alanine 140. N-[(R)-4-phosphopantothenoyl]-L-cysteine is bound by residues asparagine 142, arginine 172, and alanine 174. Cysteine 175 acts as the Proton donor in catalysis. Methionine 183 contributes to the N-[(R)-4-phosphopantothenoyl]-L-cysteine binding site.

This sequence belongs to the HFCD (homooligomeric flavin containing Cys decarboxylase) superfamily. In terms of assembly, homotrimer. Requires FMN as cofactor. In terms of tissue distribution, expressed in roots, shoots, leaves, flowers, developing siliques and seeds with highest expression in seed embryos and phloem.

The enzyme catalyses N-[(R)-4-phosphopantothenoyl]-L-cysteine + H(+) = (R)-4'-phosphopantetheine + CO2. It functions in the pathway cofactor biosynthesis; coenzyme A biosynthesis; CoA from (R)-pantothenate: step 3/5. Functionally, involved in plant growth, and salt and osmotic tolerance. Catalyzes the decarboxylation of 4'-phosphopantothenoylcysteine to 4'-phosphopantetheine, a key step in coenzyme A biosynthesis. The enzyme is also able to decarboxylate pantothenoylcysteine to pantothenoylcysteamine. The protein is Phosphopantothenoylcysteine decarboxylase of Arabidopsis thaliana (Mouse-ear cress).